A 364-amino-acid chain; its full sequence is DNA polymerase processivity factor (364 aa).

3 disordered regions span residues 1 to 24, 284 to 306, and 325 to 364; these read MDRS…KEPP, DDPK…KVEE, and VPTK…RCGM.

This sequence belongs to the herpesviridae polymerase accessory protein family.

Its function is as follows. Accessory subunit of the DNA polymerase that acts to increase the processivity of polymerization. This Homo sapiens (Human) protein is DNA polymerase processivity factor (U27).